The chain runs to 728 residues: 1,4-alpha-glucan branching enzyme GlgB (728 aa).

The active-site Nucleophile is the Asp405. Glu458 serves as the catalytic Proton donor.

It belongs to the glycosyl hydrolase 13 family. GlgB subfamily. In terms of assembly, monomer.

It carries out the reaction Transfers a segment of a (1-&gt;4)-alpha-D-glucan chain to a primary hydroxy group in a similar glucan chain.. It functions in the pathway glycan biosynthesis; glycogen biosynthesis. Its function is as follows. Catalyzes the formation of the alpha-1,6-glucosidic linkages in glycogen by scission of a 1,4-alpha-linked oligosaccharide from growing alpha-1,4-glucan chains and the subsequent attachment of the oligosaccharide to the alpha-1,6 position. The sequence is that of 1,4-alpha-glucan branching enzyme GlgB from Salmonella paratyphi A (strain ATCC 9150 / SARB42).